A 359-amino-acid chain; its full sequence is Trans-enoyl reductase mpsG (359 aa).

NADP(+)-binding residues include tyrosine 212, leucine 259, and threonine 278.

Belongs to the zinc-containing alcohol dehydrogenase family. In terms of assembly, monomer.

It participates in secondary metabolite biosynthesis. Its function is as follows. Trans-enoyl reductase; part of the gene cluster that mediates the biosynthesis of macrophasetins, 3-decalinoyltetramic acids (DTAs) which feature a tetramate (pyrrolidine-2,4-dione) unit connected to a decalin fragment and that have potent bioactivities. The PKS-NRPS mpsA together with its associated enoylreductase partner mpsG incorporate one unit of acetyl-CoA, seven units of malonyl-CoA, and one unit of L-alanine to assemble the linear tetramic acid intermediate corresponding to the backbone of macrophasetins. Without the Diels-Alderase mpsD, the mpsA/G product can undergo the non-enzymatic intramolecular Diels-Alder (IMDA) reaction to generate both macrophasetin A and macrophasetin B. Catalyzed by mpsD, the linear tetramic acid intermediate is thoroughly converted to macrophasetin A via the endo-IMDA reaction in a regioselective and stereoselective manner. Finally, the cytochrome P450 monooxygenase mpsF catalyzes the hydroxylation at C20 to yield the end product macrophasetin C. This chain is Trans-enoyl reductase mpsG, found in Macrophomina phaseolina (strain MS6) (Charcoal rot fungus).